The chain runs to 142 residues: Hemoglobin subunit alpha-1 (142 aa).

The Globin domain occupies K2 to R142. H59 is a binding site for O2. Residue H88 coordinates heme b.

Belongs to the globin family. Major hemoglobin is a heterotetramer of two alpha-1 chains and two beta-1 chains. Red blood cells.

In terms of biological role, involved in oxygen transport from the lung to the various peripheral tissues. This Triturus cristatus (Great crested newt) protein is Hemoglobin subunit alpha-1.